A 55-amino-acid chain; its full sequence is Large ribosomal subunit protein bL33 (55 aa).

It belongs to the bacterial ribosomal protein bL33 family.

The chain is Large ribosomal subunit protein bL33 from Methylorubrum extorquens (strain CM4 / NCIMB 13688) (Methylobacterium extorquens).